Reading from the N-terminus, the 540-residue chain is Putative F-box/LRR-repeat protein At5g41840 (540 aa).

The 49-residue stretch at 13–61 (GDRISGLPDALICHILSFLPTKEAASTTVLAKRWKPLLAFVPNLNFDDS) folds into the F-box domain. LRR repeat units lie at residues 80–105 (FMSF…HVKC), 137–165 (RNYC…KIQF), 189–214 (YFKI…VLAN), 217–242 (WADS…NFCR), 254–282 (YEDY…EYSD), 329–360 (ILYL…TIKT), and 361–386 (TPYV…VFEG).

In Arabidopsis thaliana (Mouse-ear cress), this protein is Putative F-box/LRR-repeat protein At5g41840.